Consider the following 315-residue polypeptide: Eukaryotic translation initiation factor 2 subunit 1 (315 aa).

The S1 motif domain maps to 17-88 (EDVVMVNVRS…EKGYIDLSKR (72 aa)). A phosphoserine mark is found at serine 49 and serine 52. A disordered region spans residues 292–315 (RLERENAEVDGDDDAEEMEAKTED). Residues 299–308 (EVDGDDDAEE) show a composition bias toward acidic residues.

This sequence belongs to the eIF-2-alpha family. As to quaternary structure, eukaryotic translation initiation factor 2 eIF2 is a heterotrimeric complex composed of an alpha (EIF2S1), a beta (EIF2S2) and a gamma (EIF2S3) chain. In terms of processing, phosphorylation at Ser-49 and Ser-52 stabilizes the eIF-2/GDP/eIF2B complex and prevents GDP/GTP exchange reaction, thus impairing the recycling of eIF-2 between successive rounds of initiation and leading to global inhibition of translation, while concomitantly initiating the preferential translation of integrated stress response (ISR)-specific mRNAs.

The protein localises to the cytoplasm. The protein resides in the stress granule. It is found in the cytosol. With respect to regulation, activity is regulated by phosphorylation at Ser-49 and Ser-52, which stabilizes the eIF2/GDP/eIF2B complex and prevents the eIF2B-mediated exchange of GDP for GTP, thereby preventing the formation of the 43S pre-initiation complex (43S PIC). This results in the global attenuation of 5' cap-dependent protein synthesis and concomitant translation of ISR-specific mRNAs that contain a short upstream open reading frame (uORF) in their 5' UTR. In terms of biological role, member of the eIF2 complex that functions in the early steps of protein synthesis by forming a ternary complex with GTP and initiator tRNA. This complex binds to a 40S ribosomal subunit, followed by mRNA binding to form a 43S pre-initiation complex. Junction of the 60S ribosomal subunit to form the 80S initiation complex is preceded by hydrolysis of the GTP bound to eIF2 and release of an eIF2-GDP binary complex. In order for eIF2 to recycle and catalyze another round of initiation, the GDP bound to eIF2 must exchange with GTP by way of a reaction catalyzed by eIF2B. EIF2S1/eIF2-alpha is a key component of the integrated stress response (ISR), required for adaptation to various stress: phosphorylation by metabolic-stress sensing protein kinases (EIF2AK1/HRI, EIF2AK2/PKR, EIF2AK3/PERK and EIF2AK4/GCN2) in response to stress converts EIF2S1/eIF2-alpha in a global protein synthesis inhibitor, leading to a attenuation of cap-dependent translation, while concomitantly initiating the preferential translation of ISR-specific mRNAs, such as the transcriptional activators ATF4 and QRICH1. In Gallus gallus (Chicken), this protein is Eukaryotic translation initiation factor 2 subunit 1 (EIF2S1).